The sequence spans 79 residues: RNA-binding protein Hfq (79 aa).

Positions Asp-10–Ile-70 constitute a Sm domain.

The protein belongs to the Hfq family. Homohexamer.

Its function is as follows. RNA chaperone that binds small regulatory RNA (sRNAs) and mRNAs to facilitate mRNA translational regulation in response to envelope stress, environmental stress and changes in metabolite concentrations. Also binds with high specificity to tRNAs. In Bartonella bacilliformis (strain ATCC 35685 / KC583 / Herrer 020/F12,63), this protein is RNA-binding protein Hfq.